Consider the following 240-residue polypeptide: Manganese transport system ATP-binding protein MntB (240 aa).

The ABC transporter domain maps to 1–233; sequence MNIQGLTIAY…KIQFAYGDAP (233 aa). 33 to 40 serves as a coordination point for ATP; that stretch reads GPNGAGKS.

It belongs to the ABC transporter superfamily.

Its subcellular location is the cell membrane. In terms of biological role, this protein is probably a component of a manganese permease, a binding protein-dependent, ATP-driven transport system. Probably responsible for energy coupling to the transport system. The sequence is that of Manganese transport system ATP-binding protein MntB (mntB) from Listeria innocua serovar 6a (strain ATCC BAA-680 / CLIP 11262).